Reading from the N-terminus, the 444-residue chain is Probable kynurenine--oxoglutarate transaminase BNA3 (444 aa).

Residue Lys-271 is modified to N6-(pyridoxal phosphate)lysine.

Belongs to the class-I pyridoxal-phosphate-dependent aminotransferase family. As to quaternary structure, homodimer. Pyridoxal 5'-phosphate serves as cofactor.

It localises to the cytoplasm. The protein localises to the mitochondrion. It catalyses the reaction L-kynurenine + 2-oxoglutarate = kynurenate + L-glutamate + H2O. The protein operates within amino-acid degradation; L-kynurenine degradation; kynurenate from L-kynurenine: step 1/2. Catalyzes the irreversible transamination of the L-tryptophan metabolite L-kynurenine to form kynurenic acid (KA). In Saccharomyces cerevisiae (strain ATCC 204508 / S288c) (Baker's yeast), this protein is Probable kynurenine--oxoglutarate transaminase BNA3 (BNA3).